The following is a 180-amino-acid chain: Large ribosomal subunit protein uL6 (180 aa).

It belongs to the universal ribosomal protein uL6 family. As to quaternary structure, part of the 50S ribosomal subunit.

In terms of biological role, this protein binds to the 23S rRNA, and is important in its secondary structure. It is located near the subunit interface in the base of the L7/L12 stalk, and near the tRNA binding site of the peptidyltransferase center. The sequence is that of Large ribosomal subunit protein uL6 from Dictyoglomus thermophilum (strain ATCC 35947 / DSM 3960 / H-6-12).